Here is a 504-residue protein sequence, read N- to C-terminus: Deoxyguanosinetriphosphate triphosphohydrolase (504 aa).

One can recognise an HD domain in the interval 66 to 273; it reads RLTHSMEVQQ…MEAADDISYC (208 aa).

It belongs to the dGTPase family. Type 1 subfamily. Homotetramer. It depends on Mg(2+) as a cofactor.

The catalysed reaction is dGTP + H2O = 2'-deoxyguanosine + triphosphate + H(+). In terms of biological role, dGTPase preferentially hydrolyzes dGTP over the other canonical NTPs. The chain is Deoxyguanosinetriphosphate triphosphohydrolase from Enterobacter sp. (strain 638).